Consider the following 556-residue polypeptide: 2-succinyl-5-enolpyruvyl-6-hydroxy-3-cyclohexene-1-carboxylate synthase (556 aa).

It belongs to the TPP enzyme family. MenD subfamily. As to quaternary structure, homodimer. Requires Mg(2+) as cofactor. Mn(2+) serves as cofactor. Thiamine diphosphate is required as a cofactor.

It catalyses the reaction isochorismate + 2-oxoglutarate + H(+) = 5-enolpyruvoyl-6-hydroxy-2-succinyl-cyclohex-3-ene-1-carboxylate + CO2. The protein operates within quinol/quinone metabolism; 1,4-dihydroxy-2-naphthoate biosynthesis; 1,4-dihydroxy-2-naphthoate from chorismate: step 2/7. Its pathway is quinol/quinone metabolism; menaquinone biosynthesis. In terms of biological role, catalyzes the thiamine diphosphate-dependent decarboxylation of 2-oxoglutarate and the subsequent addition of the resulting succinic semialdehyde-thiamine pyrophosphate anion to isochorismate to yield 2-succinyl-5-enolpyruvyl-6-hydroxy-3-cyclohexene-1-carboxylate (SEPHCHC). In Klebsiella pneumoniae (strain 342), this protein is 2-succinyl-5-enolpyruvyl-6-hydroxy-3-cyclohexene-1-carboxylate synthase.